The primary structure comprises 230 residues: Ureidoacrylate amidohydrolase RutB (230 aa).

Residue D24 is the Proton acceptor of the active site. K133 is an active-site residue. Catalysis depends on C166, which acts as the Nucleophile.

This sequence belongs to the isochorismatase family. RutB subfamily.

The catalysed reaction is (Z)-3-ureidoacrylate + H2O + H(+) = (Z)-3-aminoacrylate + NH4(+) + CO2. It catalyses the reaction (Z)-3-ureidoacrylate + H2O = (Z)-3-aminoacrylate + carbamate + H(+). It carries out the reaction (Z)-2-methylureidoacrylate + H2O + H(+) = (Z)-2-methylaminoacrylate + NH4(+) + CO2. In terms of biological role, hydrolyzes ureidoacrylate to form aminoacrylate and carbamate. The carbamate hydrolyzes spontaneously, thereby releasing one of the nitrogen atoms of the pyrimidine ring as ammonia and one of its carbon atoms as CO2. The sequence is that of Ureidoacrylate amidohydrolase RutB from Enterobacter sp. (strain 638).